A 404-amino-acid chain; its full sequence is 8-amino-7-oxononanoate synthase (404 aa).

Arg20 is a substrate binding site. 116 to 117 is a binding site for pyridoxal 5'-phosphate; it reads GY. Position 141 (His141) interacts with substrate. Pyridoxal 5'-phosphate contacts are provided by Ser187, His215, and Thr243. Lys246 is modified (N6-(pyridoxal phosphate)lysine). Thr366 contributes to the substrate binding site.

Belongs to the class-II pyridoxal-phosphate-dependent aminotransferase family. BioF subfamily. Homodimer. Requires pyridoxal 5'-phosphate as cofactor.

It catalyses the reaction 6-carboxyhexanoyl-[ACP] + L-alanine + H(+) = (8S)-8-amino-7-oxononanoate + holo-[ACP] + CO2. The protein operates within cofactor biosynthesis; biotin biosynthesis. Its function is as follows. Catalyzes the decarboxylative condensation of pimeloyl-[acyl-carrier protein] and L-alanine to produce 8-amino-7-oxononanoate (AON), [acyl-carrier protein], and carbon dioxide. This chain is 8-amino-7-oxononanoate synthase, found in Cupriavidus necator (strain ATCC 17699 / DSM 428 / KCTC 22496 / NCIMB 10442 / H16 / Stanier 337) (Ralstonia eutropha).